A 161-amino-acid chain; its full sequence is uncharacterized protein (161 aa).

The protein belongs to the SixA phosphatase family.

This is an uncharacterized protein from Mycobacterium leprae (strain TN).